Here is a 455-residue protein sequence, read N- to C-terminus: Histone chaperone RTT106 (455 aa).

N-acetylserine is present on serine 2. A dimeric region region spans residues 2–67 (SKLFLDELPE…SSDLLKTDEI (66 aa)). PH domains lie at 68 to 200 (SETN…GFKI) and 217 to 301 (INSF…VKRK). The double PH domain stretch occupies residues 68 to 301 (SETNTIFKLE…AKIDDYVKRK (234 aa)). Basic and acidic residues predominate over residues 305–314 (DKSMSEELKA). The segment at 305-455 (DKSMSEELKA…DEDGSGVEYD (151 aa)) is disordered. Polar residues predominate over residues 319–339 (KGQATDGTADQPSILQEATRQ). Acidic residues-rich tracts occupy residues 350 to 366 (SDDD…ESDL) and 376 to 395 (DGAE…DEEE). Residues 402–418 (ALNRDNSFASINGQPEQ) show a composition bias toward polar residues. Phosphoserine occurs at positions 408 and 411. A compositionally biased stretch (basic and acidic residues) spans 420–429 (LQYKEFKEPL). The segment covering 430–455 (ELEDIPIEIDNDDDEDDEDGSGVEYD) has biased composition (acidic residues). Position 450 is a phosphoserine (serine 450).

Belongs to the RTT106 family. As to quaternary structure, homodimers (via the N-terminal domain). Interacts with the SWI/SNF complex. Interacts with the RSC complex. Interacts with the HIR complex. Interacts with the CAF-1 complex. Interacts with RLF2. Interacts with SIR4. Interacts with YTA7. Interacts with CAC2. Interacts with HPC2. Interacts with HIR2. Interacts with MSI1. Interacts with HIR1. Interacts with histone H3. Interacts with histone H4.

It is found in the nucleus. It localises to the chromosome. Its function is as follows. Histones H3 and H4 chaperone involved in the nucleosome formation and heterochromatin silencing. Required for the deposition of H3K56ac-carrying H3-H4 complex onto newly-replicated DNA. Plays a role in the transcriptional regulation of the cell-cycle dependent histone genes by directly recruiting the SWI/SNF and RSC chromatin remodeling complexes to the histone genes in a cell cycle dependent manner. In cooperation with HIR and ASF1, creates a repressive structure at the core histone gene promoter and contributes to their repression outside of S phase. Involved in regulation of Ty1 transposition. In Saccharomyces cerevisiae (strain ATCC 204508 / S288c) (Baker's yeast), this protein is Histone chaperone RTT106.